The primary structure comprises 250 residues: Putative inactive flavonol synthase 2 (250 aa).

Residues 171 to 250 (TEYVMRINNY…EQWKVQECVA (80 aa)) form the Fe2OG dioxygenase domain. Fe cation is bound by residues His195 and Asp197.

The protein belongs to the iron/ascorbate-dependent oxidoreductase family.

The protein is Putative inactive flavonol synthase 2 (FLS2) of Arabidopsis thaliana (Mouse-ear cress).